The primary structure comprises 307 residues: Tyrosine recombinase XerC (307 aa).

Residues 9–95 enclose the Core-binding (CB) domain; the sequence is ETLSLAIDSF…ALRSFLDWQV (87 aa). The Tyr recombinase domain maps to 116–296; sequence HLPKNMDVDE…DFQHLAKVYD (181 aa). Residues R155, K179, H248, R251, and H274 contribute to the active site. Y283 serves as the catalytic O-(3'-phospho-DNA)-tyrosine intermediate.

The protein belongs to the 'phage' integrase family. XerC subfamily. In terms of assembly, forms a cyclic heterotetrameric complex composed of two molecules of XerC and two molecules of XerD, in which XerC interacts with XerD via its C-terminal region, XerD interacts with XerC via its C-terminal region and so on.

The protein localises to the cytoplasm. Its activity is regulated as follows. FtsK may regulate the catalytic switch between XerC and XerD in the heterotetrameric complex during the two steps of the recombination process. Functionally, site-specific tyrosine recombinase, which acts by catalyzing the cutting and rejoining of the recombining DNA molecules. Binds cooperatively to specific DNA consensus sequences that are separated from XerD binding sites by a short central region, forming the heterotetrameric XerC-XerD complex that recombines DNA substrates. The complex is essential to convert dimers of the bacterial chromosome into monomers to permit their segregation at cell division. It also contributes to the segregational stability of plasmids. In the complex XerC specifically exchanges the top DNA strands. The protein is Tyrosine recombinase XerC of Proteus mirabilis.